Reading from the N-terminus, the 426-residue chain is Formyl-CoA:oxalate CoA-transferase (426 aa).

Residues 17–18, Arg-38, 72–75, 96–98, Arg-104, and 136–139 each bind CoA; these read QS, LDTK, NFG, and KVYE. Residue Asp-168 is the Nucleophile of the active site. 247 to 249 serves as a coordination point for substrate; it reads GGQ.

Belongs to the CoA-transferase III family. Frc subfamily. In terms of assembly, homodimer.

The catalysed reaction is formyl-CoA + oxalate = oxalyl-CoA + formate. The protein operates within metabolic intermediate degradation; oxalate degradation; CO(2) and formate from oxalate: step 1/2. In terms of biological role, involved in the catabolism of oxalate and in the adapatation to low pH via the induction of the oxalate-dependent acid tolerance response (ATR). Catalyzes the transfer of the CoA moiety from formyl-CoA to oxalate. In Rhodopseudomonas palustris (strain BisB18), this protein is Formyl-CoA:oxalate CoA-transferase.